A 97-amino-acid chain; its full sequence is Mapk-regulated corepressor-interacting protein 1 (97 aa).

The disordered stretch occupies residues 1–30 (MTSSPVSRVVYNGKRNSSHRSPPNSSEIFT). Serine 21 is modified (phosphoserine). The residue at position 30 (threonine 30) is a Phosphothreonine. Phosphotyrosine is present on tyrosine 41. Residues 77-97 (TFRPIDLSDLKRRNTQDAKKS) are disordered. Residues 80–84 (PIDLS) carry the PXDLS motif motif. Over residues 82–97 (DLSDLKRRNTQDAKKS) the composition is skewed to basic and acidic residues.

The protein belongs to the MCRIP family. As to quaternary structure, interacts (unphosphorylated form, via the PXDLS motif) with CTBP1, competitively inhibiting CTBP-ZEB1 interaction. Interacts with CTBP2. Interacts with MCRIP2. Interacts with DDX6. In terms of processing, phosphorylation by MAPK3/1 (ERK1/2) regulates MCRIP1 binding to CTBP(s).

Its subcellular location is the nucleus. The protein localises to the cytoplasm. It is found in the stress granule. In terms of biological role, the phosphorylation status of MCRIP1 functions as a molecular switch to regulate epithelial-mesenchymal transition. Unphosphorylated MCRIP1 binds to and inhibits the transcriptional corepressor CTBP(s). When phosphorylated by MAPK/ERK, MCRIP1 releases CTBP(s) resulting in transcriptional silencing of the E-cadherin gene and induction of epithelial-mesenchymal transition. The chain is Mapk-regulated corepressor-interacting protein 1 (MCRIP1) from Bos taurus (Bovine).